Consider the following 217-residue polypeptide: Ribonuclease T (217 aa).

Residues 20 to 195 (VVVDVETAGF…YDTEKTAELF (176 aa)) form the Exonuclease domain. Positions 23, 25, 182, and 187 each coordinate Mg(2+). Residue His182 is the Proton donor/acceptor of the active site.

This sequence belongs to the RNase T family. In terms of assembly, homodimer. Mg(2+) serves as cofactor.

Trims short 3' overhangs of a variety of RNA species, leaving a one or two nucleotide 3' overhang. Responsible for the end-turnover of tRNA: specifically removes the terminal AMP residue from uncharged tRNA (tRNA-C-C-A). Also appears to be involved in tRNA biosynthesis. The chain is Ribonuclease T from Vibrio vulnificus (strain YJ016).